We begin with the raw amino-acid sequence, 179 residues long: Replication restart protein DnaT (179 aa).

The segment covering Ser151–Glu168 has biased composition (polar residues). The segment at Ser151–Gly179 is disordered.

It belongs to the DnaT family. As to quaternary structure, homooligomerizes. Interacts with PriB. Component of the replication restart primosome. Primosome assembly occurs via a 'hand-off' mechanism. PriA binds to replication forks, subsequently PriB then DnaT bind; DnaT then displaces ssDNA to generate the helicase loading substrate.

Its function is as follows. Involved in the restart of stalled replication forks, which reloads the replicative helicase on sites other than the origin of replication. Can function in multiple replication restart pathways. Displaces ssDNA from a PriB-ssDNA complex. Probably forms a spiral filament on ssDNA. The polypeptide is Replication restart protein DnaT (Salmonella heidelberg (strain SL476)).